Consider the following 463-residue polypeptide: Maintenance of mitochondrial morphology protein 1-2 (463 aa).

Topologically, residues 1–23 (MVIPAELIQKALKQQSGWGFTEG) are lumenal. Residues 24–44 (LVLGQLSVIITVIIILKFVIF) form a helical membrane-spanning segment. Over 45-463 (AENKSPKKGN…TGADTASGSS (419 aa)) the chain is Cytoplasmic. The segment at 72–152 (GGQTANGVKT…VAGSTSNLAV (81 aa)) is disordered. A compositionally biased stretch (polar residues) spans 108–122 (RPGSSRVSMVRSTSG). Residues 205–435 (APESLDWFNV…EPHQMIFILP (231 aa)) enclose the SMP-LTD domain.

Belongs to the MMM1 family. As to quaternary structure, homodimer. Component of the ER-mitochondria encounter structure (ERMES) or MDM complex, composed of MMM1, MDM10, MDM12 and MDM34. An MMM1 homodimer associates with one molecule of MDM12 on each side in a pairwise head-to-tail manner, and the SMP-LTD domains of MMM1 and MDM12 generate a continuous hydrophobic tunnel for phospholipid trafficking.

It localises to the endoplasmic reticulum membrane. Functionally, component of the ERMES/MDM complex, which serves as a molecular tether to connect the endoplasmic reticulum (ER) and mitochondria. Components of this complex are involved in the control of mitochondrial shape and protein biogenesis, and function in nonvesicular lipid trafficking between the ER and mitochondria. The MDM12-MMM1 subcomplex functions in the major beta-barrel assembly pathway that is responsible for biogenesis of all outer membrane beta-barrel proteins, and acts in a late step after the SAM complex. The MDM10-MDM12-MMM1 subcomplex further acts in the TOM40-specific pathway after the action of the MDM12-MMM1 complex. Essential for establishing and maintaining the structure of mitochondria and maintenance of mtDNA nucleoids. This chain is Maintenance of mitochondrial morphology protein 1-2, found in Yarrowia lipolytica (strain CLIB 122 / E 150) (Yeast).